Reading from the N-terminus, the 148-residue chain is 1,4-dihydroxy-2-naphthoyl-CoA hydrolase (148 aa).

The active site involves aspartate 15.

Belongs to the 4-hydroxybenzoyl-CoA thioesterase family. DHNA-CoA hydrolase subfamily.

It catalyses the reaction 1,4-dihydroxy-2-naphthoyl-CoA + H2O = 1,4-dihydroxy-2-naphthoate + CoA + H(+). The protein operates within cofactor biosynthesis; phylloquinone biosynthesis. It participates in quinol/quinone metabolism; 1,4-dihydroxy-2-naphthoate biosynthesis; 1,4-dihydroxy-2-naphthoate from chorismate: step 7/7. Functionally, catalyzes the hydrolysis of 1,4-dihydroxy-2-naphthoyl-CoA (DHNA-CoA) to 1,4-dihydroxy-2-naphthoate (DHNA), a reaction involved in phylloquinone (vitamin K1) biosynthesis. This Nostoc sp. (strain PCC 7120 / SAG 25.82 / UTEX 2576) protein is 1,4-dihydroxy-2-naphthoyl-CoA hydrolase.